Consider the following 1977-residue polypeptide: Voltage-dependent L-type calcium channel subunit alpha-1F (1977 aa).

A compositionally biased stretch (basic and acidic residues) spans Met1–Thr11. The disordered stretch occupies residues Met1–Val60. The Cytoplasmic portion of the chain corresponds to Met1–Lys92. Basic residues predominate over residues Pro48–Thr59. The I repeat unit spans residues Asn79–Phe375. Residues Pro93–Val111 form a helical membrane-spanning segment. Residues Tyr112 to Gln129 are Extracellular-facing. The helical transmembrane segment at Val130–Tyr149 threads the bilayer. Topologically, residues Gly150–Asn161 are cytoplasmic. Residues Gly162 to Leu180 form a helical membrane-spanning segment. Residues Glu181–Asp201 lie on the Extracellular side of the membrane. The chain crosses the membrane as a helical span at residues Val202–Val220. At Pro221–His239 the chain is on the cytoplasmic side. Residues Ile240 to Phe259 form a helical membrane-spanning segment. Residues Leu260–Leu347 lie on the Extracellular side of the membrane. A glycan (N-linked (GlcNAc...) asparagine) is linked at Asn295. Residue Glu330 participates in Ca(2+) binding. The helical transmembrane segment at Pro348 to Ser372 threads the bilayer. The Cytoplasmic portion of the chain corresponds to Gly373–Asn529. The interval Gln395–Glu412 is binding to the beta subunit. Disordered stretches follow at residues Asp418 to Ala441 and Ser455 to Glu488. Low complexity predominate over residues Ser455–Ser469. Residues Asn515–Leu761 form an II repeat. The helical transmembrane segment at Ala530 to Glu549 threads the bilayer. Topologically, residues His550–Ala564 are extracellular. A helical transmembrane segment spans residues Asn565 to Leu583. Topologically, residues Gly584–Ser591 are cytoplasmic. The chain crosses the membrane as a helical span at residues Phe592 to Leu610. At Val611 to Gly620 the chain is on the extracellular side. A helical transmembrane segment spans residues Ile621–Trp639. The Cytoplasmic segment spans residues Ala640–Ser658. Residues Leu659–Gly679 traverse the membrane as a helical segment. The Extracellular segment spans residues Gly680–Leu733. Residue Glu711 coordinates Ca(2+). A helical membrane pass occupies residues Val734–Val758. Residues Asp759–His871 lie on the Cytoplasmic side of the membrane. Residues Gly767 to Val830 are disordered. Over residues Thr768–Pro783 the composition is skewed to basic and acidic residues. Over residues Asp807–Gly826 the composition is skewed to acidic residues. The stretch at Asn858 to Phe1140 is one III repeat. A helical membrane pass occupies residues Val872–Ala890. Residues Glu891–Tyr906 are Extracellular-facing. A helical transmembrane segment spans residues Phe907–Phe926. Topologically, residues Gly927–Ser938 are cytoplasmic. The helical transmembrane segment at Trp939–Ile957 threads the bilayer. Over His958–Ser963 the chain is Extracellular. The chain crosses the membrane as a helical span at residues Val964–Ala983. Residues Lys984–Asn1002 lie on the Cytoplasmic side of the membrane. A helical transmembrane segment spans residues Ile1003 to Phe1022. Over Lys1023 to Glu1112 the chain is Extracellular. The dihydropyridine binding stretch occupies residues Arg1060–Asn1150. Ca(2+) is bound at residue Glu1086. A helical transmembrane segment spans residues Ile1113–Val1133. The Cytoplasmic segment spans residues Gly1134 to Ala1190. Residues Asn1177 to Phe1444 form an IV repeat. Residues Ala1191–Met1209 form a helical membrane-spanning segment. Residues Gln1210–Ile1224 lie on the Extracellular side of the membrane. Residues Leu1225–Phe1244 form a helical membrane-spanning segment. Residues Lys1245 to Thr1251 lie on the Cytoplasmic side of the membrane. The helical transmembrane segment at Asp1252–Glu1273 threads the bilayer. Topologically, residues Val1274–Ile1290 are extracellular. Residues Ser1291–Gly1310 traverse the membrane as a helical segment. Residues Glu1311–Tyr1329 are Cytoplasmic-facing. Residues Val1330–Phe1349 form a helical membrane-spanning segment. Over Gly1350–Phe1416 the chain is Extracellular. A dihydropyridine binding region spans residues Arg1397–Lys1463. A phenylalkylamine binding region spans residues Glu1409–Ser1452. Residues Ala1417–Met1441 traverse the membrane as a helical segment. Residues Asp1442–Leu1977 are Cytoplasmic-facing. 2 disordered regions span residues Cys1637–Asp1754 and Asp1816–Pro1841. The segment covering Asp1638 to Asp1657 has biased composition (acidic residues). Composition is skewed to polar residues over residues Asn1661–Ser1670, Thr1702–Asn1716, Gly1733–Gln1743, and Ser1829–Thr1840.

It belongs to the calcium channel alpha-1 subunit (TC 1.A.1.11) family. CACNA1F subfamily. Voltage-dependent calcium channels are multisubunit complexes, consisting of alpha-1, alpha-2, beta and delta subunits in a 1:1:1:1 ratio. The channel activity is directed by the pore-forming and voltage-sensitive alpha-1 subunit. In many cases, this subunit is sufficient to generate voltage-sensitive calcium channel activity. The auxiliary subunits beta and alpha-2/delta linked by a disulfide bridge regulate the channel activity. Interacts (via IQ domain) with CABP4; in a calcium independent manner. In terms of assembly, interacts with CABP4; suppresses robust calcium-dependent inactivation of channel without enhancing the hyperpolarized voltage-dependent activation. As to expression, expression in skeletal muscle and retina. Isoform 4 is expressed in retina.

The protein localises to the membrane. The catalysed reaction is Ca(2+)(in) = Ca(2+)(out). In terms of biological role, voltage-sensitive calcium channels (VSCC) mediate the entry of calcium ions into excitable cells and are also involved in a variety of calcium-dependent processes, including muscle contraction, hormone or neurotransmitter release, gene expression, cell motility, cell division and cell death. The isoform alpha-1F gives rise to L-type calcium currents. Long-lasting (L-type) calcium channels belong to the 'high-voltage activated' (HVA) group. They are blocked by dihydropyridines (DHP), phenylalkylamines, and by benzothiazepines. Activates at more negative voltages and does not undergo calcium-dependent inactivation (CDI), due to incoming calcium ions, during depolarization. Functionally, voltage-dependent L-type calcium channel activates at more hyperpolarized voltages and exhibits a robust calcium-dependent inactivation (CDI), due to incoming calcium ions, during depolarizations. Voltage-sensitive calcium channels (VSCC) mediate the entry of calcium ions into excitable cells and are also involved in a variety of calcium-dependent processes, including muscle contraction, hormone or neurotransmitter release, gene expression, cell motility, cell division and cell death. The polypeptide is Voltage-dependent L-type calcium channel subunit alpha-1F (Homo sapiens (Human)).